Here is a 31-residue protein sequence, read N- to C-terminus: Cytochrome b6-f complex subunit 6 (31 aa).

Residues 4-26 (LTSYFGFLLAASTITPALFIGLN) traverse the membrane as a helical segment.

Belongs to the PetL family. The 4 large subunits of the cytochrome b6-f complex are cytochrome b6, subunit IV (17 kDa polypeptide, PetD), cytochrome f and the Rieske protein, while the 4 small subunits are PetG, PetL, PetM and PetN. The complex functions as a dimer.

Its subcellular location is the plastid. It is found in the chloroplast thylakoid membrane. In terms of biological role, component of the cytochrome b6-f complex, which mediates electron transfer between photosystem II (PSII) and photosystem I (PSI), cyclic electron flow around PSI, and state transitions. PetL is important for photoautotrophic growth as well as for electron transfer efficiency and stability of the cytochrome b6-f complex. The sequence is that of Cytochrome b6-f complex subunit 6 from Phalaenopsis aphrodite subsp. formosana (Moth orchid).